The following is a 586-amino-acid chain: MSWLFGINKGPKGEGAGPPPPLPPAQPGAEGGGDRGLGDRPAPKDKWSNFDPTGLERAAKAARELEHSRYAKDALNLAQMQEQTLQLEQQSKLKEYEAAVEQLKSEQIRAQAEERRKTLSEETRQHQARAQYQDKLARQRYEDQLKQQQLLNEENLRKQEESVQKQEAMRRATVEREMELRHKNEMLRVEAEARARAKAERENADIIREQIRLKAAEHRQTVLESIRTAGTLFGEGFRAFVTDWDKVTATVAGLTLLAVGVYSAKNATLVAGRFIEARLGKPSLVRETSRITVLEALRHPIQVSRRLLSRPQDALEGVVLSPSLEARVRDIAIATRNTKKNRSLYRNILMYGPPGTGKTLFAKKLALHSGMDYAIMTGGDVAPMGREGVTAMHKLFDWANTSRRGLLLFVDEADAFLRKRATEKISEDLRATLNAFLYRTGQHSNKFMLVLASNQPEQFDWAINDRINEMVHFDLPGQEERERLVRMYFDKYVLKPATEGKQRLKLAQFDYGRKCSEVARLTEGMSGREIAQLAVSWQATAYASEDGVLTEAMMDTRVQDAVQQHQQKMCWLKAEGPGRGDEPSPS.

Disordered stretches follow at residues 1 to 55 (MSWL…PTGL) and 111 to 134 (QAEE…QYQD). Ser2 bears the N-acetylserine mark. The segment at 2 to 50 (SWLFGINKGPKGEGAGPPPPLPPAQPGAEGGGDRGLGDRPAPKDKWSNF) is required for interaction with the inner surface of the mitochondrial outer membrane. Residues 2–246 (SWLFGINKGP…FRAFVTDWDK (245 aa)) lie on the Mitochondrial intermembrane side of the membrane. Residues 17–26 (GPPPPLPPAQ) show a composition bias toward pro residues. Basic and acidic residues-rich tracts occupy residues 32 to 48 (GGDR…DKWS) and 111 to 125 (QAEE…ETRQ). Positions 86–219 (QLEQQSKLKE…QIRLKAAEHR (134 aa)) form a coiled coil. A helical transmembrane segment spans residues 247–264 (VTATVAGLTLLAVGVYSA). The Mitochondrial matrix segment spans residues 265–586 (KNATLVAGRF…PGRGDEPSPS (322 aa)). The segment at 290 to 305 (RITVLEALRHPIQVSR) is S100B-binding. Ser321 carries the post-translational modification Phosphoserine. Residue 352–359 (GPPGTGKT) coordinates ATP. Lys491 carries the post-translational modification N6-acetyllysine.

This sequence belongs to the AAA ATPase family. Can form homooligomers. Homodimer formation at the N-terminus may be regulated by ATP and is required for the interaction with the inner surface of the mitochondrial outer membrane and correct mitochondrial homeostasis. Interacts with components of the mitochondrial ribosome and with other proteins involved in mitochondrial RNA metabolism. May also interact with protein involved in lipid metabolism, including STARD9. May interact with FAM210A. Interacts with GADD45GIP1. Interacts with S100B in a Ca(+2)- and Zn(+2)-dependent manner; this interaction probably occurs in the cytosol prior to mitochondrial targeting. S100B could assist ATAD3A cytoplasmic processing, preventing aggregation and favoring mitochondrial localization. Interacts with HSP60/HSPD1. Forms heterooligomers with ATAD3B; this interaction may affect ATAD3A activity. Interacts with CLPB. Interacts with EIF2AK3/PERK; ATAD3A and EIF2S1/eIF-2-alpha occupy a common binding site within the cytoplasmic loop of EIF2AK3/PERK, leading to prevent EIF2AK3/PERK association with its substrate EIF2S1/eIF-2-alpha. As to expression, overexpressed in lung adenocarcinomas (at protein level).

The protein resides in the mitochondrion inner membrane. Its subcellular location is the mitochondrion matrix. The protein localises to the mitochondrion nucleoid. The enzyme catalyses ATP + H2O = ADP + phosphate + H(+). Functionally, essential for mitochondrial network organization, mitochondrial metabolism and cell growth at organism and cellular level. May play an important role in mitochondrial protein synthesis. May also participate in mitochondrial DNA replication. May bind to mitochondrial DNA D-loops and contribute to nucleoid stability. Required for enhanced channeling of cholesterol for hormone-dependent steroidogenesis. Involved in mitochondrial-mediated antiviral innate immunity. Required to protect mitochondria from the PERK-mediated unfolded protein response: specifically inhibits the activity of EIF2AK3/PERK at mitochondria-endoplasmic reticulum contact sites, thereby providing a safe haven for mitochondrial protein translation during endoplasmic reticulum stress. Ability to inhibit EIF2AK3/PERK is independent of its ATPase activity. Also involved in the mitochondrial DNA damage response by promoting signaling between damaged genomes and the mitochondrial membrane, leading to activation of the integrated stress response (ISR). The protein is ATPase family AAA domain-containing protein 3A of Homo sapiens (Human).